A 230-amino-acid chain; its full sequence is MASLGLQLVGYVLGLLGLLGTVIAMLLPSWRTSSYVGASIVTAVGFSKGLWMECATHSTGITQCDIYSTMLGLPADIQAAQAMMVTSSAMSSLACIVSVVGMRCTVFFQESRAKDRVAVVGGVFFILGGLLGFIPVAWNLHGILRDFYSPLVPDSMKFEIGEALYLGIISSLFSLIAGIFLCFSCSPQGNRSNYYDAYQAQPLATRSSPRPGQAPKGKSEFNSYSLTGYV.

The Cytoplasmic segment spans residues Met-1–Gln-7. Residues Leu-8–Pro-28 traverse the membrane as a helical segment. Residues Ser-29–Gln-81 are Extracellular-facing. An intrachain disulfide couples Cys-54 to Cys-64. Residues Ala-82–Met-102 form a helical membrane-spanning segment. The Cytoplasmic portion of the chain corresponds to Arg-103 to Arg-116. The chain crosses the membrane as a helical span at residues Val-117–Ala-137. Topologically, residues Trp-138–Glu-162 are extracellular. A helical transmembrane segment spans residues Ala-163–Phe-183. Residues Ser-184–Val-230 lie on the Cytoplasmic side of the membrane. The tract at residues Thr-205–Val-230 is disordered. Residue Lys-218 forms a Glycyl lysine isopeptide (Lys-Gly) (interchain with G-Cter in SUMO) linkage. Phosphoserine is present on residues Ser-219 and Ser-223. Residues Glu-220–Val-230 show a composition bias toward polar residues. An interaction with TJP1, TJP2 and TJP3 region spans residues Tyr-229–Val-230.

Belongs to the claudin family. Can form homo- and heteropolymers with other claudins to mediate paracellular barrier and channel functions of tight junctions in response to physiological stimuli. Homopolymers interact with CLDN3, but not CLDN1, homopolymers. Directly interacts with TJP1/ZO-1, TJP2/ZO-2 and TJP3/ZO-3. The disulfide bond is necessary for pore formation, but is not required for correct protein trafficking.

It localises to the cell junction. Its subcellular location is the tight junction. The protein resides in the cell membrane. The enzyme catalyses Na(+)(in) = Na(+)(out). It catalyses the reaction K(+)(in) = K(+)(out). It carries out the reaction Rb(+)(in) = Rb(+)(out). The catalysed reaction is Li(+)(in) = Li(+)(out). The enzyme catalyses Cs(+)(in) = Cs(+)(out). It catalyses the reaction Ca(2+)(in) = Ca(2+)(out). It carries out the reaction methylamine(out) = methylamine(in). The catalysed reaction is choline(out) = choline(in). The enzyme catalyses H2O(in) = H2O(out). Functionally, forms paracellular channels: polymerizes in tight junction strands with cation- and water-selective channels through the strands, conveying epithelial permeability in a process known as paracellular tight junction permeability. In intestinal epithelium, allows for sodium and water fluxes from the peritoneal side to the lumen of the intestine to regulate nutrient absorption and clear enteric pathogens as part of mucosal immune response. In kidney, allows passive sodium and calcium reabsorption across proximal tubules from the lumen back to the bloodstream. In the hepatobiliary tract, allows paracellular water and cation fluxes in the hepatic perivenous areas and biliary epithelium to generate bile flow and maintain osmotic gradients. The sequence is that of Claudin-2 (CLDN2) from Bos taurus (Bovine).